The chain runs to 534 residues: High affinity cGMP-specific 3',5'-cyclic phosphodiesterase 9A (534 aa).

Residues 175 to 496 (PRRDVPTYPK…EHYEELKQLD (322 aa)) form the PDEase domain. The Proton donor role is filled by His-251. A 3',5'-cyclic GMP-binding site is contributed by 251-255 (HNFRH). Zn(2+) is bound by residues His-255, His-291, and Asp-292. Asp-292 lines the 3',5'-cyclic GMP pocket. Position 292 (Asp-292) interacts with Mg(2+). Position 318 is a phosphoserine (Ser-318). Residues Asp-401, Tyr-423, and 451–452 (AQ) contribute to the 3',5'-cyclic GMP site. Asp-401 provides a ligand contact to Zn(2+). The disordered stretch occupies residues 500–534 (KELQKKTESLTSGAPENTTEKNRDAKDSEGHSPPN). Positions 517-534 (TTEKNRDAKDSEGHSPPN) are enriched in basic and acidic residues.

Belongs to the cyclic nucleotide phosphodiesterase family. PDE9 subfamily. As to quaternary structure, homodimer. Zn(2+) is required as a cofactor. The cofactor is Mg(2+). Highly expressed in kidney. Lower levels in liver, lung and brain. Widely expressed in brain, with highest expression in cerebellar Purkinje cells. Present in heart (at protein level).

The protein localises to the cell projection. The protein resides in the ruffle membrane. It localises to the cytoplasm. It is found in the perinuclear region. Its subcellular location is the golgi apparatus. The protein localises to the endoplasmic reticulum. The protein resides in the cell membrane. It localises to the sarcolemma. It carries out the reaction 3',5'-cyclic GMP + H2O = GMP + H(+). It functions in the pathway purine metabolism; 3',5'-cyclic GMP degradation; GMP from 3',5'-cyclic GMP: step 1/1. With respect to regulation, inhibited by SCH 51866 and moderately, by zaprinast. Specifically inhibited by PF-04447943 (6-[(3S,4S)-4-methyl-1-(pyrimidin-2-ylmethyl)pyrrolidin-3-yl]-1-(tetrahydro-2H-pyran-4-yl)-1,5-dihydro-4H-pyrazolo[3,4-d]pyrimidin-4-one). Functionally, specifically hydrolyzes the second messenger cGMP, which is a key regulator of many important physiological processes. Highly specific: compared to other members of the cyclic nucleotide phosphodiesterase family, has the highest affinity and selectivity for cGMP. Specifically regulates natriuretic-peptide-dependent cGMP signaling in heart, acting as a regulator of cardiac hypertrophy in myocytes and muscle. Does not regulate nitric oxide-dependent cGMP in heart. Additional experiments are required to confirm whether its ability to hydrolyze natriuretic-peptide-dependent cGMP is specific to heart or is a general feature of the protein. In brain, involved in cognitive function, such as learning and long-term memory. This is High affinity cGMP-specific 3',5'-cyclic phosphodiesterase 9A (Pde9a) from Mus musculus (Mouse).